Consider the following 158-residue polypeptide: Large ribosomal subunit protein uL16 (158 aa).

It belongs to the universal ribosomal protein uL16 family. As to quaternary structure, part of the 50S ribosomal subunit.

Its function is as follows. Binds 23S rRNA and is also seen to make contacts with the A and possibly P site tRNAs. The chain is Large ribosomal subunit protein uL16 from Prochlorococcus marinus (strain MIT 9313).